A 55-amino-acid chain; its full sequence is Large ribosomal subunit protein bL33 (55 aa).

The protein belongs to the bacterial ribosomal protein bL33 family.

This Paramagnetospirillum magneticum (strain ATCC 700264 / AMB-1) (Magnetospirillum magneticum) protein is Large ribosomal subunit protein bL33.